Consider the following 710-residue polypeptide: Amyloid beta precursor protein binding family B member 1 (710 aa).

The span at 1 to 15 shows a compositional bias: polar residues; it reads MSVPSSLSQSAINAN. Disordered regions lie at residues 1–24, 131–254, 276–299, and 340–365; these read MSVP…ALSL, GLRG…TDSD, GTTQ…EESQ, and TFPA…NTNP. A compositionally biased stretch (acidic residues) spans 145–173; the sequence is GPDEGEEKAAGEAEEEEEDDDDEEEEEDL. Position 204 is an N6-acetyllysine (K204). The span at 223-234 shows a compositional bias: polar residues; it reads SWATLSQGSPSY. One can recognise a WW domain in the interval 253-285; the sequence is SDLPAGWMRVQDTSGTYYWHIPTGTTQWEPPGR. The span at 287-299 shows a compositional bias: low complexity; that stretch reads SPSQGSSPQEESQ. Positions 370–509 constitute a PID 1 domain; the sequence is FAVRSLGWVE…SKIMAERRNA (140 aa). Residue S459 is modified to Phosphoserine; by PKC. S517 is subject to Phosphoserine. One can recognise a PID 2 domain in the interval 542-699; the sequence is KFQVYYLGNV…RRGVQSLWGS (158 aa). Residue Y547 is modified to Phosphotyrosine; by ABL1. A Phosphoserine; by SGK1 modification is found at S610. Residue K701 is modified to N6-acetyllysine.

As to quaternary structure, component of a complex, at least composed of APBB1, RASD1/DEXRAS1 and APP. Interacts (via PID domain 2) with APP (with the intracellular domain of the amyloid-beta precursor protein). Interacts (via PID domain 2) with RASD1/DEXRAS1; impairs the transcription activation activity. Interacts (via PID domain 1) with KAT5/TIP60. Interacts (via the WW domain) with the proline-rich region of APBB1IP. Interacts with TSHZ1 and TSHZ2. Interacts (via the WW domain) with histone H2AX (when phosphorylated on 'Tyr-142') and the proline-rich region of ENAH. Interacts with MAPK8. Interacts (via PID domain 1) with TSHZ3 (via homeobox domain). Interacts with SET. Found in a trimeric complex with HDAC1 and TSHZ3; the interaction between HDAC1 and APBB1 is mediated by TSHZ3. Interacts (via WWW domain) with NEK6. Interacts (via WWW domain) with ABL1. Interacts with RNF157. Interacts with ARF6. Post-translationally, phosphorylation at Ser-610 by SGK1 promotes its localization to the nucleus. Phosphorylated following nuclear translocation. Phosphorylation at Tyr-547 by ABL1 enhances transcriptional activation activity and reduces the affinity for RASD1/DEXRAS1. Phosphorylated at Ser-459 by PKC upon insulin activation. In terms of processing, acetylation at Lys-204 and Lys-701 by KAT5 promotes its transcription activator activity. Polyubiquitination by RNF157 leads to degradation by the proteasome. Highly expressed in brain; strongly reduced in post-mortem elderly subjects with Alzheimer disease. As to expression, expressed preferentially in the brain.

It is found in the cell membrane. The protein resides in the cytoplasm. It localises to the nucleus. The protein localises to the cell projection. Its subcellular location is the growth cone. It is found in the nucleus speckle. Functionally, transcription coregulator that can have both coactivator and corepressor functions. Adapter protein that forms a transcriptionally active complex with the gamma-secretase-derived amyloid precursor protein (APP) intracellular domain. Plays a central role in the response to DNA damage by translocating to the nucleus and inducing apoptosis. May act by specifically recognizing and binding histone H2AX phosphorylated on 'Tyr-142' (H2AXY142ph) at double-strand breaks (DSBs), recruiting other pro-apoptosis factors such as MAPK8/JNK1. Required for histone H4 acetylation at double-strand breaks (DSBs). Its ability to specifically bind modified histones and chromatin modifying enzymes such as KAT5/TIP60, probably explains its transcription activation activity. Functions in association with TSHZ3, SET and HDAC factors as a transcriptional repressor, that inhibits the expression of CASP4. Associates with chromatin in a region surrounding the CASP4 transcriptional start site(s). Involved in hippocampal neurite branching and neuromuscular junction formation, as a result plays a role in spatial memory functioning. Plays a role in the maintenance of lens transparency. May play a role in muscle cell strength. Acts as a molecular adapter that functions in neurite outgrowth by activating the RAC1-ARF6 axis upon insulin treatment. This chain is Amyloid beta precursor protein binding family B member 1, found in Homo sapiens (Human).